We begin with the raw amino-acid sequence, 29 residues long: Lambda-theraphotoxin-Ec2b (29 aa).

Intrachain disulfides connect Cys-2–Cys-16, Cys-9–Cys-21, and Cys-15–Cys-25.

It belongs to the neurotoxin 30 (phrixotoxin) family. As to expression, expressed by the venom gland.

It localises to the secreted. Functionally, insect-selective neurotoxin that potently blocks insect calcium-activated potassium (BKCa) channels (Slo-type) in cockroach dorsal unpaired median (DUM) neurons (IC(50)=25.3 nM). This occurs in the absence of any shifts in the voltage dependence of activation. May interact with the turret and/or loop region of the external entrance to the channel and does not project deeply into the pore of the channel. In vivo, does not show toxicity in mice after intracerebroventricular injection of up to 25 pmol/g (1.8 ug/20 g mouse). The sequence is that of Lambda-theraphotoxin-Ec2b from Eucratoscelus constrictus (African red-rump baboon spider).